The following is a 420-amino-acid chain: MDKLLIRGRKPLDGEIRISGAKNAALPILAATLLADEPVTVGNLPHLNDITTMIELLGRMGVELLIDEKMSVEVHANTIKHFHAPYELVKTMRASILVLGPLVAHFGEAEVSLPGGCAIGTRPVNLHIHGLEMMGADIKVENGYIKAKTNGRLKGAHIFLDTVTVTGTENLMMAAALAEGKTILENAAREPEVVDLAECLIAMGADIKGHGTATIEINGVERLHGCHYNVLPDRIETGTYLVAAAATGGRVKVKDTREDILEAVLLKLEEAGAHITTGPDWIELDMKGKRPKAVSLRTAPYPAFPTDMQAQFAAMNAVAEGSGTIVETVFENRFMHLQELIRMGADITLEGNAAIIKGVEHLTGAPVMATDLRASASLVIAGLMADGDTIVDRIYHIDRGYECIEEKLQLLGASIRRLPA.

22-23 is a binding site for phosphoenolpyruvate; that stretch reads KN. R93 is a UDP-N-acetyl-alpha-D-glucosamine binding site. C117 (proton donor) is an active-site residue. C117 carries the 2-(S-cysteinyl)pyruvic acid O-phosphothioketal modification. UDP-N-acetyl-alpha-D-glucosamine contacts are provided by D307 and V329.

The protein belongs to the EPSP synthase family. MurA subfamily.

It is found in the cytoplasm. It carries out the reaction phosphoenolpyruvate + UDP-N-acetyl-alpha-D-glucosamine = UDP-N-acetyl-3-O-(1-carboxyvinyl)-alpha-D-glucosamine + phosphate. The protein operates within cell wall biogenesis; peptidoglycan biosynthesis. Cell wall formation. Adds enolpyruvyl to UDP-N-acetylglucosamine. In Marinobacter nauticus (strain ATCC 700491 / DSM 11845 / VT8) (Marinobacter aquaeolei), this protein is UDP-N-acetylglucosamine 1-carboxyvinyltransferase.